The chain runs to 291 residues: 4-hydroxy-tetrahydrodipicolinate synthase (291 aa).

Residue Thr-44 participates in pyruvate binding. Catalysis depends on Tyr-132, which acts as the Proton donor/acceptor. Catalysis depends on Lys-161, which acts as the Schiff-base intermediate with substrate. Residue Ile-202 participates in pyruvate binding.

Belongs to the DapA family. In terms of assembly, homotetramer; dimer of dimers.

The protein localises to the cytoplasm. The enzyme catalyses L-aspartate 4-semialdehyde + pyruvate = (2S,4S)-4-hydroxy-2,3,4,5-tetrahydrodipicolinate + H2O + H(+). It functions in the pathway amino-acid biosynthesis; L-lysine biosynthesis via DAP pathway; (S)-tetrahydrodipicolinate from L-aspartate: step 3/4. Catalyzes the condensation of (S)-aspartate-beta-semialdehyde [(S)-ASA] and pyruvate to 4-hydroxy-tetrahydrodipicolinate (HTPA). This is 4-hydroxy-tetrahydrodipicolinate synthase from Endomicrobium trichonymphae.